Reading from the N-terminus, the 572-residue chain is Na(+)/citrate cotransporter (572 aa).

A run of 8 helical transmembrane segments spans residues 13–33, 53–73, 80–100, 124–144, 218–238, 255–275, 315–335, and 357–377; these read SFAILLFTPILMLPLVILIPD, VIPVAVTSLLPVLLFPLLKVL, IQYMKDTNMLFLGSLIVAVAV, LMLGFMFVTAFLSMWISNTAA, SASIGGTATLTGTGPNVVLLG, SWFGFAFPNMVMMLVLAWLWL, SLSYPECNVLFCFTLLVILWF, and HITDATVAIFVAILLFIIPSQ. N382 is a glycosylation site (N-linked (GlcNAc...) asparagine). Transmembrane regions (helical) follow at residues 410–430, 443–463, 491–511, and 532–552; these read VPWDIVLLLGGGFAMAKGCET, PLRLVKPAVITLILSCLVAMT, PLYVMIPCTMSASLAFMLPVA, and TGLIMNFVGILSVFLSVNTWG. The N-linked (GlcNAc...) asparagine glycan is linked to N566.

The protein belongs to the SLC13A/DASS transporter (TC 2.A.47) family. NADC subfamily. As to quaternary structure, homodimer.

The protein localises to the cell membrane. It catalyses the reaction citrate(out) + 4 Na(+)(out) = citrate(in) + 4 Na(+)(in). Its activity is regulated as follows. Inhibited by Li(+). High-affinity sodium/citrate cotransporter that mediates citrate entry into cells, which is a critical participant of biochemical pathways. May function in various metabolic processes in which citrate has a critical role such as energy production (Krebs cycle), fatty acid synthesis, cholesterol synthesis, glycolysis, and gluconeogenesis. Transports citrate into the cell in a Na(+)-dependent manner, recognizing the trivalent form of citrate (physiological pH) rather than the divalent form. Can recognizes succinate as a substrate, but its affinity for succinate is several fold lower than for citrate. The stoichiometry is probably 4 Na(+) for each carboxylate, irrespective of whether the translocated substrate is divalent or trivalent, rendering the process electrogenic. Involved in the regulation of citrate levels in the brain. This chain is Na(+)/citrate cotransporter (Slc13a5), found in Mus musculus (Mouse).